The following is a 255-amino-acid chain: NAP1-related protein 2 (255 aa).

Residues 19–60 are a coiled coil; sequence IDAELVLSIEKLQEIQDDLEKINEKASDEVLEVEQKYNVIRK. Residues 213-255 are disordered; sequence NPLTYFNNDADEEDFDGDDDGDEEEKEGDSDEDDDEEDEVGEE. The segment covering 221–255 has biased composition (acidic residues); sequence DADEEDFDGDDDGDEEEKEGDSDEDDDEEDEVGEE.

It belongs to the nucleosome assembly protein (NAP) family. In terms of assembly, can form homomeric and heteromeric protein complexes with NRP1. Binds histones H2A and H2B and associates with chromatin in vivo. Ubiquitous.

The protein resides in the cytoplasm. Its subcellular location is the nucleus. Functionally, acts as a histone H2A/H2B chaperone in nucleosome assembly, playing a critical role for the correct expression of genes involved in root proliferation and patterning. Required with NRP1 for the maintenance of cell proliferation and differentiation in postembryonic root growth. Involved in both intramolecular and intermolecular somatic homologous recombination. This is NAP1-related protein 2 (NRP2) from Arabidopsis thaliana (Mouse-ear cress).